The chain runs to 125 residues: Ribonuclease VapC19 (125 aa).

Positions 3 to 122 (LIDTTIAVDH…RHFPMFPDLQ (120 aa)) constitute a PINc domain. 2 residues coordinate Mg(2+): aspartate 5 and aspartate 93.

Belongs to the PINc/VapC protein family. The cofactor is Mg(2+).

Functionally, toxic component of a type II toxin-antitoxin (TA) system. An RNase. Its toxic effect is neutralized by coexpression with cognate antitoxin VapB19. The polypeptide is Ribonuclease VapC19 (Mycobacterium tuberculosis (strain CDC 1551 / Oshkosh)).